Here is a 628-residue protein sequence, read N- to C-terminus: EF-hand calcium-binding domain-containing protein 7 (628 aa).

Polar residues predominate over residues Met-1–Pro-22. The interval Met-1–Thr-24 is disordered. 2 EF-hand domains span residues Thr-102 to Lys-137 and Met-138 to Gln-173. A disordered region spans residues Gln-192 to Ser-231. A phosphoserine mark is found at Ser-200 and Ser-212. The span at Glu-222–Ser-231 shows a compositional bias: polar residues. In terms of domain architecture, EF-hand 3 spans Glu-402–Glu-437. Residues Asp-415, Asp-417, Asn-419, and Glu-426 each coordinate Ca(2+).

In terms of assembly, component of the EvC complex composed of EFCAB7, IQCE, EVC2 and EVC; built from two subcomplexes, EVC2:EVC and EFCAB7:IQCE. Interacts (via EF-hand 1 and 2) with IQCE (via N-terminus); this interaction anchors the EVC-EVC2 complex in a signaling microdomain at the base of cilia and stimulates the Hedgehog (Hh) pathway. Interacts with EVC2 (via N-terminal end). Interacts with EVC.

The protein localises to the cell projection. It localises to the cilium membrane. Component of the EvC complex that positively regulates ciliary Hedgehog (Hh) signaling. Required for the localization of the EVC2:EVC subcomplex at the base of primary cilia. This Mus musculus (Mouse) protein is EF-hand calcium-binding domain-containing protein 7 (Efcab7).